Here is a 365-residue protein sequence, read N- to C-terminus: Peptide chain release factor 2 (365 aa).

N5-methylglutamine is present on Q252.

It belongs to the prokaryotic/mitochondrial release factor family. Methylated by PrmC. Methylation increases the termination efficiency of RF2.

Its subcellular location is the cytoplasm. Functionally, peptide chain release factor 2 directs the termination of translation in response to the peptide chain termination codons UGA and UAA. The protein is Peptide chain release factor 2 (prfB) of Haemophilus influenzae (strain ATCC 51907 / DSM 11121 / KW20 / Rd).